The chain runs to 308 residues: 4-hydroxyproline 2-epimerase (308 aa).

Residue C88 is the Proton acceptor of the active site. Residues 89–90 (GH), H208, and D232 each bind substrate. The active-site Proton donor is the C236. 237–238 (GT) is a binding site for substrate.

It belongs to the proline racemase family.

The enzyme catalyses trans-4-hydroxy-L-proline = cis-4-hydroxy-D-proline. Functionally, catalyzes the reversible epimerization of cis-4-hydroxy-D-proline (c4DHyp) to trans-4-hydroxy-L-proline (t4LHyp). May be involved in a degradation pathway that allows P.putida strain KT2440 to grow on either epimer of 4-hydroxyproline, c4DHyp and t4LHyp, as the sole carbon and nitrogen source. Does not exhibit measureable racemase activity in vitro with any of the 19 natural chiral amino acid enantiomers. The polypeptide is 4-hydroxyproline 2-epimerase (Pseudomonas putida (strain ATCC 47054 / DSM 6125 / CFBP 8728 / NCIMB 11950 / KT2440)).